The sequence spans 134 residues: Ribonuclease P protein component (134 aa).

The protein belongs to the RnpA family. As to quaternary structure, consists of a catalytic RNA component (M1 or rnpB) and a protein subunit.

The enzyme catalyses Endonucleolytic cleavage of RNA, removing 5'-extranucleotides from tRNA precursor.. In terms of biological role, RNaseP catalyzes the removal of the 5'-leader sequence from pre-tRNA to produce the mature 5'-terminus. It can also cleave other RNA substrates such as 4.5S RNA. The protein component plays an auxiliary but essential role in vivo by binding to the 5'-leader sequence and broadening the substrate specificity of the ribozyme. The chain is Ribonuclease P protein component from Pseudomonas putida (strain ATCC 700007 / DSM 6899 / JCM 31910 / BCRC 17059 / LMG 24140 / F1).